Consider the following 353-residue polypeptide: GTPase Obg (353 aa).

In terms of domain architecture, Obg spans 1–159; sequence MRFVDEVVIN…RVIRLELKLL (159 aa). In terms of domain architecture, OBG-type G spans 160–334; sequence ADVGLLGMPN…LCTAIMQELT (175 aa). GTP is bound by residues 166-173, 191-195, 213-216, 284-287, and 315-317; these read GMPNAGKS, FTTLH, DIPG, NKMD, and SAA. Mg(2+) contacts are provided by Ser173 and Thr193.

The protein belongs to the TRAFAC class OBG-HflX-like GTPase superfamily. OBG GTPase family. Monomer. Mg(2+) is required as a cofactor.

Its subcellular location is the cytoplasm. In terms of biological role, an essential GTPase which binds GTP, GDP and possibly (p)ppGpp with moderate affinity, with high nucleotide exchange rates and a fairly low GTP hydrolysis rate. Plays a role in control of the cell cycle, stress response, ribosome biogenesis and in those bacteria that undergo differentiation, in morphogenesis control. The chain is GTPase Obg from Dichelobacter nodosus (strain VCS1703A).